Reading from the N-terminus, the 202-residue chain is Probable adenylyl-sulfate kinase (202 aa).

36-43 (GLSGSGKS) is an ATP binding site. Ser-110 acts as the Phosphoserine intermediate in catalysis.

The protein belongs to the APS kinase family.

The catalysed reaction is adenosine 5'-phosphosulfate + ATP = 3'-phosphoadenylyl sulfate + ADP + H(+). It functions in the pathway sulfur metabolism; hydrogen sulfide biosynthesis; sulfite from sulfate: step 2/3. In terms of biological role, catalyzes the synthesis of activated sulfate. In Halalkalibacterium halodurans (strain ATCC BAA-125 / DSM 18197 / FERM 7344 / JCM 9153 / C-125) (Bacillus halodurans), this protein is Probable adenylyl-sulfate kinase.